Consider the following 307-residue polypeptide: tRNA-cytidine(32) 2-sulfurtransferase (307 aa).

A PP-loop motif motif is present at residues 44 to 49; the sequence is SGGKDS. Cys119, Cys122, and Cys210 together coordinate [4Fe-4S] cluster.

The protein belongs to the TtcA family. As to quaternary structure, homodimer. Requires Mg(2+) as cofactor. [4Fe-4S] cluster is required as a cofactor.

It is found in the cytoplasm. The catalysed reaction is cytidine(32) in tRNA + S-sulfanyl-L-cysteinyl-[cysteine desulfurase] + AH2 + ATP = 2-thiocytidine(32) in tRNA + L-cysteinyl-[cysteine desulfurase] + A + AMP + diphosphate + H(+). The protein operates within tRNA modification. Catalyzes the ATP-dependent 2-thiolation of cytidine in position 32 of tRNA, to form 2-thiocytidine (s(2)C32). The sulfur atoms are provided by the cysteine/cysteine desulfurase (IscS) system. The protein is tRNA-cytidine(32) 2-sulfurtransferase of Aliivibrio salmonicida (strain LFI1238) (Vibrio salmonicida (strain LFI1238)).